Consider the following 299-residue polypeptide: Pseudouridine-5'-phosphate glycosidase (299 aa).

Residue Glu-23 is the Proton donor of the active site. Substrate contacts are provided by Lys-84 and Val-104. Mn(2+) is bound at residue Asp-136. 138-140 (SAD) serves as a coordination point for substrate. The active-site Nucleophile is the Lys-157.

It belongs to the pseudouridine-5'-phosphate glycosidase family. Homotrimer. Mn(2+) is required as a cofactor.

The catalysed reaction is D-ribose 5-phosphate + uracil = psi-UMP + H2O. In terms of biological role, catalyzes the reversible cleavage of pseudouridine 5'-phosphate (PsiMP) to ribose 5-phosphate and uracil. Functions biologically in the cleavage direction, as part of a pseudouridine degradation pathway. This chain is Pseudouridine-5'-phosphate glycosidase, found in Solibacter usitatus (strain Ellin6076).